Reading from the N-terminus, the 815-residue chain is Calpain-3 (815 aa).

A disordered region spans residues 7–36; that stretch reads ASVAPRTAAEPRSPGPVPHPAQSKATEAGG. The 344-residue stretch at 74–417 folds into the Calpain catalytic domain; sequence LYVDPEFPPD…FTKLEICNLT (344 aa). Active-site residues include Cys-129, His-334, and Asn-358. Positions 418–586 are domain III; sequence ADALQSDKLQ…KRNLSEEVEN (169 aa). A linker region spans residues 587 to 649; sequence TISVDRPVPI…QESEEQQQFR (63 aa). Residues 605–646 form a disordered region; sequence SNKELGVDQESEEGKGKTSPDKQEQSPQPQPGSSDQESEEQQ. Basic and acidic residues predominate over residues 616 to 628; that stretch reads EEGKGKTSPDKQE. A compositionally biased stretch (low complexity) spans 629–639; the sequence is QSPQPQPGSSD. 4 consecutive EF-hand domains span residues 643–677, 686–719, 716–751, and 781–815; these read EEQQ…VVNK, FTLE…NKIK, NKIK…AGFH, and VRLE…TMYA. The segment at 650–815 is domain IV; sequence NIFKQIAGDD…LEWLQLTMYA (166 aa). Positions 656, 659, 661, 666, 699, 701, 703, 705, 710, 729, 731, 733, 735, 740, 794, 796, 798, and 800 each coordinate Ca(2+).

The protein belongs to the peptidase C2 family. Homodimer; via EF-hand domain 4. Interacts with TTN/titin. Interacts with CMYA5; this interaction, which results in CMYA5 proteolysis, may protect CAPN3 from autolysis. Interacts with SIMC1. Interacts with UTP25; the interaction is required for CAPN3 translocation to the nucleolus.

It is found in the cytoplasm. Its subcellular location is the nucleus. The protein resides in the nucleolus. It catalyses the reaction Broad endopeptidase activity.. Its activity is regulated as follows. Activated by micromolar concentrations of calcium and inhibited by calpastatin. Its function is as follows. Calcium-regulated non-lysosomal thiol-protease. Proteolytically cleaves CTBP1. Mediates, with UTP25, the proteasome-independent degradation of p53/TP53. The sequence is that of Calpain-3 (CAPN3) from Macaca fascicularis (Crab-eating macaque).